The sequence spans 104 residues: DNA-directed RNA polymerase subunit Rpo13 (104 aa).

2 disordered regions span residues 1–34 (MVSGMSTEEEKEGTNDEEVSEEREVEETSEEEFP) and 76–104 (EKRDSRRKAKKAASKKVKKTKKKEKSVEG). Residues 7–31 (TEEEKEGTNDEEVSEEREVEETSEE) show a composition bias toward acidic residues. Position 32 (Glu-32) interacts with DNA. Positions 80 to 104 (SRRKAKKAASKKVKKTKKKEKSVEG) are enriched in basic residues. The tract at residues 81-104 (RRKAKKAASKKVKKTKKKEKSVEG) is required to bind DNA.

It belongs to the archaeal Rpo13 RNA polymerase subunit family. Part of the 13-subunit RNA polymerase complex. Rpo1N and Rpo5 form a cleft which docks Rpo13. Forms predominantly dimers in solution, although monomers and trimers can also be seen. Found associated with RNAP but also as a homodimer pool in the cytoplasm in vivo.

The protein localises to the cytoplasm. The enzyme catalyses RNA(n) + a ribonucleoside 5'-triphosphate = RNA(n+1) + diphosphate. DNA-dependent RNA polymerase (RNAP) catalyzes the transcription of DNA into RNA using the four ribonucleoside triphosphates as substrates. A molten-globule protein, it binds dsDNA in the RNAP, in vitro binds dsDNA but not ssDNA. Its position in RNAP implies it functions in both transcription initiation and elongation. This chain is DNA-directed RNA polymerase subunit Rpo13, found in Saccharolobus shibatae (strain ATCC 51178 / DSM 5389 / JCM 8931 / NBRC 15437 / B12) (Sulfolobus shibatae).